The sequence spans 301 residues: Phosphatidylserine decarboxylase proenzyme (301 aa).

Active-site charge relay system; for autoendoproteolytic cleavage activity residues include Asp117, His173, and Ser260. Ser260 functions as the Schiff-base intermediate with substrate; via pyruvic acid; for decarboxylase activity in the catalytic mechanism. Ser260 bears the Pyruvic acid (Ser); by autocatalysis mark.

It belongs to the phosphatidylserine decarboxylase family. PSD-B subfamily. Prokaryotic type II sub-subfamily. As to quaternary structure, heterodimer of a large membrane-associated beta subunit and a small pyruvoyl-containing alpha subunit. Pyruvate is required as a cofactor. In terms of processing, is synthesized initially as an inactive proenzyme. Formation of the active enzyme involves a self-maturation process in which the active site pyruvoyl group is generated from an internal serine residue via an autocatalytic post-translational modification. Two non-identical subunits are generated from the proenzyme in this reaction, and the pyruvate is formed at the N-terminus of the alpha chain, which is derived from the carboxyl end of the proenzyme. The autoendoproteolytic cleavage occurs by a canonical serine protease mechanism, in which the side chain hydroxyl group of the serine supplies its oxygen atom to form the C-terminus of the beta chain, while the remainder of the serine residue undergoes an oxidative deamination to produce ammonia and the pyruvoyl prosthetic group on the alpha chain. During this reaction, the Ser that is part of the protease active site of the proenzyme becomes the pyruvoyl prosthetic group, which constitutes an essential element of the active site of the mature decarboxylase.

It is found in the cell membrane. The enzyme catalyses a 1,2-diacyl-sn-glycero-3-phospho-L-serine + H(+) = a 1,2-diacyl-sn-glycero-3-phosphoethanolamine + CO2. It participates in phospholipid metabolism; phosphatidylethanolamine biosynthesis; phosphatidylethanolamine from CDP-diacylglycerol: step 2/2. Its function is as follows. Catalyzes the formation of phosphatidylethanolamine (PtdEtn) from phosphatidylserine (PtdSer). This chain is Phosphatidylserine decarboxylase proenzyme, found in Chlamydia trachomatis serovar L2b (strain UCH-1/proctitis).